Reading from the N-terminus, the 184-residue chain is ATP synthase subunit b, chloroplastic (184 aa).

The helical transmembrane segment at 31-49 (IINSSVVLSVLIYFGKGVL) threads the bilayer.

The protein belongs to the ATPase B chain family. As to quaternary structure, F-type ATPases have 2 components, F(1) - the catalytic core - and F(0) - the membrane proton channel. F(1) has five subunits: alpha(3), beta(3), gamma(1), delta(1), epsilon(1). F(0) has four main subunits: a(1), b(1), b'(1) and c(10-14). The alpha and beta chains form an alternating ring which encloses part of the gamma chain. F(1) is attached to F(0) by a central stalk formed by the gamma and epsilon chains, while a peripheral stalk is formed by the delta, b and b' chains.

Its subcellular location is the plastid. It localises to the chloroplast thylakoid membrane. Functionally, f(1)F(0) ATP synthase produces ATP from ADP in the presence of a proton or sodium gradient. F-type ATPases consist of two structural domains, F(1) containing the extramembraneous catalytic core and F(0) containing the membrane proton channel, linked together by a central stalk and a peripheral stalk. During catalysis, ATP synthesis in the catalytic domain of F(1) is coupled via a rotary mechanism of the central stalk subunits to proton translocation. In terms of biological role, component of the F(0) channel, it forms part of the peripheral stalk, linking F(1) to F(0). In Pinus thunbergii (Japanese black pine), this protein is ATP synthase subunit b, chloroplastic.